A 37-amino-acid polypeptide reads, in one-letter code: Cytochrome b6-f complex subunit 5 (37 aa).

Residues 5–25 (LLSGIVLGLIPITLAGLFVTA) form a helical membrane-spanning segment.

This sequence belongs to the PetG family. The 4 large subunits of the cytochrome b6-f complex are cytochrome b6, subunit IV (17 kDa polypeptide, PetD), cytochrome f and the Rieske protein, while the 4 small subunits are PetG, PetL, PetM and PetN. The complex functions as a dimer.

Its subcellular location is the plastid. It is found in the chloroplast thylakoid membrane. Functionally, component of the cytochrome b6-f complex, which mediates electron transfer between photosystem II (PSII) and photosystem I (PSI), cyclic electron flow around PSI, and state transitions. PetG is required for either the stability or assembly of the cytochrome b6-f complex. This is Cytochrome b6-f complex subunit 5 from Chaetosphaeridium globosum (Charophycean green alga).